The following is a 190-amino-acid chain: Elongation factor P 2 (190 aa).

It belongs to the elongation factor P family.

The protein localises to the cytoplasm. Its pathway is protein biosynthesis; polypeptide chain elongation. Involved in peptide bond synthesis. Stimulates efficient translation and peptide-bond synthesis on native or reconstituted 70S ribosomes in vitro. Probably functions indirectly by altering the affinity of the ribosome for aminoacyl-tRNA, thus increasing their reactivity as acceptors for peptidyl transferase. The sequence is that of Elongation factor P 2 (efp2) from Chlamydia caviae (strain ATCC VR-813 / DSM 19441 / 03DC25 / GPIC) (Chlamydophila caviae).